The sequence spans 357 residues: DNA primase small subunit PriS (357 aa).

Residues Asp105, Asp107, and Asp259 contribute to the active site.

Belongs to the eukaryotic-type primase small subunit family. Heterodimer of a small subunit (PriS) and a large subunit (PriL). It depends on Mg(2+) as a cofactor. Mn(2+) is required as a cofactor.

Its function is as follows. Catalytic subunit of DNA primase, an RNA polymerase that catalyzes the synthesis of short RNA molecules used as primers for DNA polymerase during DNA replication. The small subunit contains the primase catalytic core and has DNA synthesis activity on its own. Binding to the large subunit stabilizes and modulates the activity, increasing the rate of DNA synthesis while decreasing the length of the DNA fragments, and conferring RNA synthesis capability. The DNA polymerase activity may enable DNA primase to also catalyze primer extension after primer synthesis. May also play a role in DNA repair. The protein is DNA primase small subunit PriS of Methanococcus maripaludis (strain C5 / ATCC BAA-1333).